A 62-amino-acid chain; its full sequence is Large ribosomal subunit protein uL30 (62 aa).

It belongs to the universal ribosomal protein uL30 family. Part of the 50S ribosomal subunit.

This Gluconobacter oxydans (strain 621H) (Gluconobacter suboxydans) protein is Large ribosomal subunit protein uL30.